The primary structure comprises 112 residues: Putative transposase YkgN (112 aa).

It belongs to the transposase 8 family.

The protein is Putative transposase YkgN (ykgN) of Escherichia coli (strain K12).